We begin with the raw amino-acid sequence, 580 residues long: Glypican-3 (580 aa).

Residues 1–24 (MAGTVRTACLVVAMLLSLDFPGQA) form the signal peptide. Position 25 is a pyrrolidone carboxylic acid (Q25). Intrachain disulfides connect C35/C72, C65/C262, C73/C265, C197/C349, C252/C285, C274/C422, and C278/C410. N-linked (GlcNAc...) asparagine glycans are attached at residues N124 and N241. A Phosphoserine; by FAM20C modification is found at S352. N-linked (GlcNAc...) asparagine glycosylation is present at N418. O-linked (Xyl...) (glycosaminoglycan) serine glycosylation is found at S495 and S509. N554 carries the GPI-anchor amidated asparagine lipid modification. Residues 555-580 (LGNVHSPLKLLTSMAISVVCFFFLVH) constitute a propeptide, removed in mature form.

Belongs to the glypican family. In terms of assembly, heterodimer; disulfide-linked. Cleavage by a furin-like convertase results in production of alpha and beta chains which form a disulfide-linked heterodimer. Interacts with DPP4. Interacts with FGF2. Interacts with WNT5A. Also interacts with WNT3A and WNT7B. Interacts with hedgehog protein SHH; the heparan sulfate chains are not required for the interaction. Also interacts with hedgehog protein IHH. Interacts with CD81. Interacts with Wnt receptors FZD4, FZD7 and FZD8; the heparan sulfate chains are required for the interaction. In terms of processing, O-glycosylated; contains heparan sulfate and/or chondroitin sulfate. Cleaved intracellularly by a furin-like convertase to generate 2 subunits, alpha and beta, which remain associated through disulfide bonds and are associated with the cell surface via the GPI-anchor. This processing is essential for its role in inhibition of hedgehog signaling. A second proteolytic event may result in cleavage of the protein on the cell surface, separating it from the GPI-anchor and leading to its shedding from the cell surface. As to expression, detected in placenta (at protein level). Highly expressed in lung, liver and kidney.

Its subcellular location is the cell membrane. Functionally, cell surface proteoglycan. Negatively regulates the hedgehog signaling pathway when attached via the GPI-anchor to the cell surface by competing with the hedgehog receptor PTC1 for binding to hedgehog proteins. Binding to the hedgehog protein SHH triggers internalization of the complex by endocytosis and its subsequent lysosomal degradation. Positively regulates the canonical Wnt signaling pathway by binding to the Wnt receptor Frizzled and stimulating the binding of the Frizzled receptor to Wnt ligands. Positively regulates the non-canonical Wnt signaling pathway. Binds to CD81 which decreases the availability of free CD81 for binding to the transcriptional repressor HHEX, resulting in nuclear translocation of HHEX and transcriptional repression. Inhibits the dipeptidyl peptidase activity of DPP4. Plays a role in limb patterning and skeletal development by controlling the cellular response to BMP4. Modulates the effects of growth factors BMP2, BMP7 and FGF7 on renal branching morphogenesis. Required for coronary vascular development. Plays a role in regulating cell movements during gastrulation. The sequence is that of Glypican-3 (GPC3) from Homo sapiens (Human).